The following is an 822-amino-acid chain: Putative ESX-1 scaffolding and assembly protein SaeB (822 aa).

Its function is as follows. May be involved in assembly of the ESX-1 / type VII specialized secretion system (T7SS), which exports several proteins including EsxA and EsxB. Involved in DNA conjugation in recipient (MDK8) but not donor (mc(2)155) strain. The sequence is that of Putative ESX-1 scaffolding and assembly protein SaeB from Mycolicibacterium smegmatis (strain ATCC 700084 / mc(2)155) (Mycobacterium smegmatis).